We begin with the raw amino-acid sequence, 862 residues long: DNA mismatch repair protein MutS (862 aa).

Position 618 to 625 (618 to 625) interacts with ATP; sequence GPNMGGKS. The disordered stretch occupies residues 799-824; that stretch reads QLESRDNQASPAVASAPQQQSLSLSP. Positions 806-824 are enriched in low complexity; sequence QASPAVASAPQQQSLSLSP.

It belongs to the DNA mismatch repair MutS family.

This protein is involved in the repair of mismatches in DNA. It is possible that it carries out the mismatch recognition step. This protein has a weak ATPase activity. This chain is DNA mismatch repair protein MutS, found in Shewanella denitrificans (strain OS217 / ATCC BAA-1090 / DSM 15013).